Here is a 140-residue protein sequence, read N- to C-terminus: Lymphocyte antigen 6H (140 aa).

A signal peptide spans 1–25 (MLPAAMKGLGLVLLAALLCSSPAHG). In terms of domain architecture, UPAR/Ly6 spans 26-91 (LWCQDCTLTT…RHFFSDYLMG (66 aa)). 5 disulfides stabilise this stretch: Cys28–Cys52, Cys31–Cys40, Cys45–Cys73, Cys77–Cys104, and Cys105–Cys110. Asn36 is a glycosylation site (N-linked (GlcNAc...) asparagine).

The protein resides in the cell membrane. The protein is Lymphocyte antigen 6H (LY6H) of Bos taurus (Bovine).